The primary structure comprises 480 residues: ATP-dependent rRNA helicase RRP3 (480 aa).

2 stretches are compositionally biased toward basic and acidic residues: residues Met-1–Ser-17 and Asp-33–Lys-46. The disordered stretch occupies residues Met-1–Thr-63. The Q motif signature appears at Lys-64–Ala-92. The Helicase ATP-binding domain maps to Ile-95–Val-266. An ATP-binding site is contributed by Ala-108–Thr-115. Positions Asp-214–Asp-217 match the DEAD box motif. Residues Asn-277–Met-437 form the Helicase C-terminal domain. The interval Ala-450–Gln-480 is disordered. The segment covering Lys-462 to Arg-471 has biased composition (basic residues).

The protein belongs to the DEAD box helicase family. DDX47/RRP3 subfamily. Interacts with the SSU processome.

The protein resides in the nucleus. The catalysed reaction is ATP + H2O = ADP + phosphate + H(+). Its function is as follows. ATP-dependent rRNA helicase required for pre-ribosomal RNA processing. Involved in the maturation of the 35S-pre-rRNA and to its cleavage to mature 18S rRNA. In Yarrowia lipolytica (strain CLIB 122 / E 150) (Yeast), this protein is ATP-dependent rRNA helicase RRP3.